Here is an 88-residue protein sequence, read N- to C-terminus: Toxin RelE2 (88 aa).

It belongs to the RelE toxin family.

Toxic component of a type II toxin-antitoxin (TA) system. Its toxic effect is neutralized by coexpression with cognate antitoxin RelB2 but no other ParD or RelB antitoxin. This chain is Toxin RelE2 (relE2), found in Caulobacter vibrioides (strain ATCC 19089 / CIP 103742 / CB 15) (Caulobacter crescentus).